Here is a 205-residue protein sequence, read N- to C-terminus: Protein phosphatase inhibitor 2 (205 aa).

Disordered stretches follow at residues 1 to 46 (MAAS…KSQK) and 64 to 205 (GLMK…SQSS). N-acetylalanine is present on alanine 2. Required for binding PPP1CC regions lie at residues 12-17 (KGILKN) and 43-55 (KSQKWDEMNILAT). The span at 17 to 26 (NKTSSTSSRV) shows a compositional bias: polar residues. Positions 35-46 (SVDEELSKKSQK) are enriched in basic and acidic residues. Serine 44 bears the Phosphoserine; by ATM mark. Threonine 73 carries the phosphothreonine; by GSK3 modification. Over residues 80 to 91 (GDDDDAYSDTET) the composition is skewed to acidic residues. Serine 87 carries the post-translational modification Phosphoserine. Phosphothreonine occurs at positions 89, 92, and 96. The segment covering 110–120 (SEPKYRIREQE) has biased composition (basic and acidic residues). A phosphoserine mark is found at serine 121, serine 122, serine 127, and serine 130. The segment covering 121 to 130 (SSGEEDSDLS) has biased composition (acidic residues). Over residues 131 to 143 (PEEREKKRQFEMK) the composition is skewed to basic and acidic residues. The interval 147–150 (HYNE) is required for binding PPP1CC catalytic center, displacing metal ions and inhibition of PPP1CC catalytic activity. The segment covering 167 to 179 (DDEEDEEMSETAD) has biased composition (acidic residues). A compositionally biased stretch (polar residues) spans 182–205 (SMNTEESNQGSTPSDQRQNKSQSS).

The protein belongs to the protein phosphatase inhibitor 2 family. In terms of assembly, heterodimer with PP1. Post-translationally, phosphorylation on Ser-44 by ATM activates PP1 by dissociating the PP1-PPP1R2 complex. Phosphorylation on Thr-73 by GSK3 activates PP1 by dissociating the PP1-PPP1R2 complex.

In terms of biological role, inhibitor of protein-phosphatase 1. This Oryctolagus cuniculus (Rabbit) protein is Protein phosphatase inhibitor 2 (PPP1R2).